A 155-amino-acid chain; its full sequence is Ribosomal RNA large subunit methyltransferase H (155 aa).

S-adenosyl-L-methionine contacts are provided by residues Leu-72, Gly-103, and 122-127 (LSDLTL).

This sequence belongs to the RNA methyltransferase RlmH family. As to quaternary structure, homodimer.

Its subcellular location is the cytoplasm. It catalyses the reaction pseudouridine(1915) in 23S rRNA + S-adenosyl-L-methionine = N(3)-methylpseudouridine(1915) in 23S rRNA + S-adenosyl-L-homocysteine + H(+). Its function is as follows. Specifically methylates the pseudouridine at position 1915 (m3Psi1915) in 23S rRNA. The polypeptide is Ribosomal RNA large subunit methyltransferase H (Albidiferax ferrireducens (strain ATCC BAA-621 / DSM 15236 / T118) (Rhodoferax ferrireducens)).